We begin with the raw amino-acid sequence, 229 residues long: Translation initiation factor 6 (229 aa).

The protein belongs to the eIF-6 family.

Functionally, binds to the 50S ribosomal subunit and prevents its association with the 30S ribosomal subunit to form the 70S initiation complex. This Thermococcus kodakarensis (strain ATCC BAA-918 / JCM 12380 / KOD1) (Pyrococcus kodakaraensis (strain KOD1)) protein is Translation initiation factor 6.